The primary structure comprises 355 residues: IgG receptor FcRn large subunit p51 (355 aa).

Residues 1-24 (MRVPRSQPWGLALLLLLLPGTLRA) form the signal peptide. The alpha-1 stretch occupies residues 25 to 111 (AESHRSLLYH…ALKVFGDRDS (87 aa)). Residues 25-300 (AESHRSLLYH…LESPAKSSVP (276 aa)) lie on the Extracellular side of the membrane. The tract at residues 112–201 (YTLQGLLGCE…ERGRGNLEWK (90 aa)) is alpha-2. Asn-126 carries N-linked (GlcNAc...) asparagine glycosylation. An alpha-3 region spans residues 202-291 (EPPSMRLKAR…GPAQPLTVEL (90 aa)). The Ig-like C1-type domain occupies 203 to 292 (PPSMRLKARP…PAQPLTVELE (90 aa)). Cys-222 and Cys-276 form a disulfide bridge. The segment at 293–298 (SPAKSS) is connecting peptide. The helical transmembrane segment at 301-321 (VIGISIGFLLLMTVAAGGALL) threads the bilayer. Over 322–355 (WRRRKGLPAPWIAFRGDDIGALLPTPGLSKDAES) the chain is Cytoplasmic.

This sequence belongs to the immunoglobulin superfamily. In terms of assembly, fcRn complex consists of two subunits: p51, and p14 which is equivalent to beta-2-microglobulin. It forms an MHC class I-like heterodimer. Interacts with albumin/ALB; this interaction regulates ALB homeostasis. Expressed in liver and mammary gland of non-lactating animals. Expressed in hepatocytes and in epithelial cells of portal bile ductuli. Not expressed in the brances of portal veins or hepatic arteries. Expressed in the epithelial cells of the acini and ducti in the mammary gland with expression emphasized at the apical side. Not expressed in blood vessels of mammary gland.

The protein localises to the cell membrane. It localises to the endosome membrane. Its function is as follows. Cell surface receptor that transfers passive humoral immunity from the mother to the newborn. Binds to the Fc region of monomeric immunoglobulin gamma and mediates its selective uptake from milk. IgG in the milk is bound at the apical surface of the intestinal epithelium. The resultant FcRn-IgG complexes are transcytosed across the intestinal epithelium and IgG is released from FcRn into blood or tissue fluids. Throughout life, contributes to effective humoral immunity by recycling IgG and extending its half-life in the circulation. Mechanistically, monomeric IgG binding to FcRn in acidic endosomes of endothelial and hematopoietic cells recycles IgG to the cell surface where it is released into the circulation. In addition of IgG, regulates homeostasis of the other most abundant circulating protein albumin/ALB. In Camelus dromedarius (Dromedary), this protein is IgG receptor FcRn large subunit p51.